A 288-amino-acid chain; its full sequence is 2-hydroxy-6-oxononadienedioate/2-hydroxy-6-oxononatrienedioate hydrolase (288 aa).

The 236-residue stretch at 39–274 folds into the AB hydrolase-1 domain; that stretch reads LVLLHGSGPG…RCGHWAQWEH (236 aa). The Proton acceptor role is filled by His268.

It belongs to the AB hydrolase superfamily. MhpC family. In terms of assembly, homodimer.

The catalysed reaction is (2Z,4E)-2-hydroxy-6-oxonona-2,4-dienedioate + H2O = (2Z)-2-hydroxypenta-2,4-dienoate + succinate + H(+). It catalyses the reaction (2Z,4E,7E)-2-hydroxy-6-oxonona-2,4,7-trienedioate + H2O = (2Z)-2-hydroxypenta-2,4-dienoate + fumarate + H(+). The protein operates within aromatic compound metabolism; 3-phenylpropanoate degradation. Its function is as follows. Catalyzes the cleavage of the C5-C6 bond of 2-hydroxy-6-oxononadienedioate and 2-hydroxy-6-oxononatrienedioate, a dienol ring fission product of the bacterial meta-cleavage pathway for degradation of phenylpropionic acid. This Paraburkholderia phymatum (strain DSM 17167 / CIP 108236 / LMG 21445 / STM815) (Burkholderia phymatum) protein is 2-hydroxy-6-oxononadienedioate/2-hydroxy-6-oxononatrienedioate hydrolase.